The following is a 552-amino-acid chain: DNA ligase (552 aa).

Glu244 provides a ligand contact to ATP. Lys246 serves as the catalytic N6-AMP-lysine intermediate. Residues Arg251, Arg266, Glu296, Phe336, Arg408, and Lys414 each coordinate ATP.

The protein belongs to the ATP-dependent DNA ligase family. Mg(2+) serves as cofactor.

It catalyses the reaction ATP + (deoxyribonucleotide)n-3'-hydroxyl + 5'-phospho-(deoxyribonucleotide)m = (deoxyribonucleotide)n+m + AMP + diphosphate.. DNA ligase that seals nicks in double-stranded DNA during DNA replication, DNA recombination and DNA repair. In Methanothrix thermoacetophila (strain DSM 6194 / JCM 14653 / NBRC 101360 / PT) (Methanosaeta thermophila), this protein is DNA ligase.